A 623-amino-acid polypeptide reads, in one-letter code: ATP-dependent lipid A-core flippase (623 aa).

Helical transmembrane passes span 66–86 (LVLA…LAVI), 103–123 (VWFL…CNFF), 190–210 (LVVI…TLII), 290–310 (LTPL…AVAL), and 317–337 (ALTV…FDPI). Residues 67–349 (VLAVLLMAGA…LTNLAGKMQK (283 aa)) enclose the ABC transmembrane type-1 domain. Positions 382-618 (VEFRAVSHRF…NGLYASLYNM (237 aa)) constitute an ABC transporter domain. Position 416 to 423 (416 to 423 (GRSGSGKT)) interacts with ATP.

Belongs to the ABC transporter superfamily. Lipid exporter (TC 3.A.1.106) family. Homodimer.

The protein localises to the cell inner membrane. The catalysed reaction is ATP + H2O + lipid A-core oligosaccharideSide 1 = ADP + phosphate + lipid A-core oligosaccharideSide 2.. In terms of biological role, involved in lipopolysaccharide (LPS) biosynthesis. Translocates lipid A-core from the inner to the outer leaflet of the inner membrane. Transmembrane domains (TMD) form a pore in the inner membrane and the ATP-binding domain (NBD) is responsible for energy generation. The protein is ATP-dependent lipid A-core flippase of Bordetella bronchiseptica (strain ATCC BAA-588 / NCTC 13252 / RB50) (Alcaligenes bronchisepticus).